The primary structure comprises 78 residues: Acyl carrier protein 1 (78 aa).

A Carrier domain is found at 2–77 (STIEERVKKI…EAIDYIVAHQ (76 aa)). O-(pantetheine 4'-phosphoryl)serine is present on Ser-37.

The protein belongs to the acyl carrier protein (ACP) family. 4'-phosphopantetheine is transferred from CoA to a specific serine of apo-ACP by AcpS. This modification is essential for activity because fatty acids are bound in thioester linkage to the sulfhydryl of the prosthetic group.

Its subcellular location is the cytoplasm. Its pathway is lipid metabolism; fatty acid biosynthesis. Functionally, carrier of the growing fatty acid chain in fatty acid biosynthesis. This is Acyl carrier protein 1 from Pseudomonas aeruginosa (strain ATCC 15692 / DSM 22644 / CIP 104116 / JCM 14847 / LMG 12228 / 1C / PRS 101 / PAO1).